Here is a 74-residue protein sequence, read N- to C-terminus: Anaphase-promoting complex subunit 13 (74 aa).

Residues 33–56 (LSELPEPEQDNGGTTESVKEQEMK) form a disordered region.

This sequence belongs to the APC13 family. As to quaternary structure, the mammalian APC/C is composed at least of 14 distinct subunits ANAPC1, ANAPC2, CDC27/APC3, ANAPC4, ANAPC5, CDC16/APC6, ANAPC7, CDC23/APC8, ANAPC10, ANAPC11, CDC26/APC12, ANAPC13, ANAPC15 and ANAPC16 that assemble into a complex of at least 19 chains with a combined molecular mass of around 1.2 MDa; APC/C interacts with FZR1 and FBXO5.

It localises to the nucleus. It participates in protein modification; protein ubiquitination. Its function is as follows. Component of the anaphase promoting complex/cyclosome (APC/C), a cell cycle-regulated E3 ubiquitin ligase that controls progression through mitosis and the G1 phase of the cell cycle. The APC/C complex acts by mediating ubiquitination and subsequent degradation of target proteins: it mainly mediates the formation of 'Lys-11'-linked polyubiquitin chains and, to a lower extent, the formation of 'Lys-48'- and 'Lys-63'-linked polyubiquitin chains. The APC/C complex catalyzes assembly of branched 'Lys-11'-/'Lys-48'-linked branched ubiquitin chains on target proteins. In Mus musculus (Mouse), this protein is Anaphase-promoting complex subunit 13 (Anapc13).